Reading from the N-terminus, the 178-residue chain is Mediator of RNA polymerase II transcription subunit 21 (178 aa).

Positions 36-91 are disordered; sequence DDDDVNSYSNMAANAPLPQSQQQRQQQKKQQEPQQEIEQPQQQSNPESKSISPPKE. The segment covering 67-85 has biased composition (low complexity); sequence EPQQEIEQPQQQSNPESKS. A coiled-coil region spans residues 128-169; the sequence is NEQMNLINELSDKLQAIEEERIQKIKEKDNLLNLLESMIKEV.

Belongs to the Mediator complex subunit 21 family. As to quaternary structure, component of the Mediator complex.

The protein resides in the nucleus. Functionally, component of the Mediator complex, a coactivator involved in the regulated transcription of nearly all RNA polymerase II-dependent genes. Mediator functions as a bridge to convey information from gene-specific regulatory proteins to the basal RNA polymerase II transcription machinery. Mediator is recruited to promoters by direct interactions with regulatory proteins and serves as a scaffold for the assembly of a functional preinitiation complex with RNA polymerase II and the general transcription factors. The polypeptide is Mediator of RNA polymerase II transcription subunit 21 (SRB7) (Candida albicans (strain SC5314 / ATCC MYA-2876) (Yeast)).